Consider the following 247-residue polypeptide: Mannose-specific lectin CML-2 (247 aa).

2 residues coordinate a carbohydrate: Asp87 and Gly107. Residue Asn119 is glycosylated (N-linked (GlcNAc...) asparagine). Residues Glu129 and Asp131 each contribute to the Mn(2+) site. Ca(2+) contacts are provided by Asp131 and Phe133. The a carbohydrate site is built by Ser138 and Asn139. Ca(2+) contacts are provided by Asn139 and Asp142. 2 residues coordinate Mn(2+): Asp142 and His147. The a carbohydrate site is built by Gly221, Glu222, and Gln223.

It belongs to the leguminous lectin family. In terms of assembly, homodimer; non-covalently linked. In terms of processing, glycosylated.

Its function is as follows. Mannose-specific lectin. Also binds alpha-methyl-D-mannoside, D-glucose, N-acetyl-D-glucosamine and sucrose but not D-galactose, D-arabinose, D-fructose, D-xylose, lactose or glycoproteins fetiun, PSM and ovalbumin. Shows agglutinating activity towards rabbit erythrocytes. This is Mannose-specific lectin CML-2 from Centrolobium microchaete (Canarywood tree).